The chain runs to 270 residues: uncharacterized protein (270 aa).

The first 22 residues, 1–22 (MEYIKKIALYMSVLLLIIFIGG), serve as a signal peptide directing secretion. Residue Cys-23 is the site of N-palmitoyl cysteine attachment. Cys-23 carries the S-diacylglycerol cysteine lipid modification.

Belongs to the staphylococcal tandem lipoprotein family.

Its subcellular location is the cell membrane. This is an uncharacterized protein from Staphylococcus aureus (strain USA300).